Consider the following 431-residue polypeptide: Adenylosuccinate synthetase (431 aa).

Residues 13–19 (GDEGKGK) and 41–43 (GHT) contribute to the GTP site. Aspartate 14 acts as the Proton acceptor in catalysis. The Mg(2+) site is built by aspartate 14 and glycine 41. Residues 14–17 (DEGK), 39–42 (NAGH), threonine 130, arginine 144, glutamine 225, threonine 240, and arginine 304 each bind IMP. Histidine 42 acts as the Proton donor in catalysis. 300-306 (ATTHRPR) is a binding site for substrate. GTP is bound by residues arginine 306, 332-334 (KLD), and 414-416 (STG).

It belongs to the adenylosuccinate synthetase family. In terms of assembly, homodimer. Mg(2+) serves as cofactor.

It localises to the cytoplasm. The enzyme catalyses IMP + L-aspartate + GTP = N(6)-(1,2-dicarboxyethyl)-AMP + GDP + phosphate + 2 H(+). The protein operates within purine metabolism; AMP biosynthesis via de novo pathway; AMP from IMP: step 1/2. Plays an important role in the de novo pathway of purine nucleotide biosynthesis. Catalyzes the first committed step in the biosynthesis of AMP from IMP. This chain is Adenylosuccinate synthetase, found in Nitrosococcus oceani (strain ATCC 19707 / BCRC 17464 / JCM 30415 / NCIMB 11848 / C-107).